We begin with the raw amino-acid sequence, 269 residues long: Ribosomal RNA small subunit methyltransferase A (269 aa).

Asn11, Leu13, Gly37, Glu57, Asp85, and Asn104 together coordinate S-adenosyl-L-methionine.

It belongs to the class I-like SAM-binding methyltransferase superfamily. rRNA adenine N(6)-methyltransferase family. RsmA subfamily.

The protein localises to the cytoplasm. The enzyme catalyses adenosine(1518)/adenosine(1519) in 16S rRNA + 4 S-adenosyl-L-methionine = N(6)-dimethyladenosine(1518)/N(6)-dimethyladenosine(1519) in 16S rRNA + 4 S-adenosyl-L-homocysteine + 4 H(+). Specifically dimethylates two adjacent adenosines (A1518 and A1519) in the loop of a conserved hairpin near the 3'-end of 16S rRNA in the 30S particle. May play a critical role in biogenesis of 30S subunits. In Campylobacter hominis (strain ATCC BAA-381 / DSM 21671 / CCUG 45161 / LMG 19568 / NCTC 13146 / CH001A), this protein is Ribosomal RNA small subunit methyltransferase A.